The following is a 298-amino-acid chain: Glycine--tRNA ligase alpha subunit (298 aa).

It belongs to the class-II aminoacyl-tRNA synthetase family. In terms of assembly, tetramer of two alpha and two beta subunits.

It is found in the cytoplasm. It carries out the reaction tRNA(Gly) + glycine + ATP = glycyl-tRNA(Gly) + AMP + diphosphate. This chain is Glycine--tRNA ligase alpha subunit, found in Neisseria meningitidis serogroup C / serotype 2a (strain ATCC 700532 / DSM 15464 / FAM18).